The primary structure comprises 450 residues: Probable glucoamylase (450 aa).

An N-terminal signal peptide occupies residues 1 to 16 (MRTYWLFLLLGGVVSA). The propeptide occupies 17–28 (ESLLSPNKRSKE). W147 lines the substrate pocket. D203 (proton acceptor) is an active-site residue. E206 acts as the Proton donor in catalysis. Residues N383 and N409 are each glycosylated (N-linked (GlcNAc...) asparagine).

The protein belongs to the glycosyl hydrolase 15 family.

The enzyme catalyses Hydrolysis of terminal (1-&gt;4)-linked alpha-D-glucose residues successively from non-reducing ends of the chains with release of beta-D-glucose.. The protein is Probable glucoamylase (meu17) of Schizosaccharomyces pombe (strain 972 / ATCC 24843) (Fission yeast).